The following is a 791-amino-acid chain: Transient receptor potential cation channel subfamily V member 3 (791 aa).

Disordered stretches follow at residues 1–37 (MNAH…LTPT), 52–71 (PNPT…MDSN), and 76–113 (LSGN…EEQR). Over 1–430 (MNAHSKEMAP…TLEPLHTLLH (430 aa)) the chain is Cytoplasmic. The segment covering 95–105 (ETPSNPNSPSA) has biased composition (polar residues). ANK repeat units follow at residues 117 to 148 (KRLK…LCRR), 170 to 198 (TCLM…EEND), 214 to 243 (EGQT…DVNA), 261 to 291 (FGET…DITS), 298 to 330 (NILH…RSGN), 340 to 362 (DGLT…YILS), and 398 to 420 (TTDN…HEML). The helical transmembrane segment at 431-460 (TKWKKFAKYMFFLSFCFYFFYNITLTLVSY) threads the bilayer. Over 461–479 (YRPREDEDLPHPLALTHKM) the chain is Extracellular. The chain crosses the membrane as a helical span at residues 480–508 (SWLQLLGRMFVLIWATCISVKEGIAIFLL). Residues 509–519 (RPSDLQSILSD) lie on the Cytoplasmic side of the membrane. A helical transmembrane segment spans residues 520–540 (AWFHFVFFVQAVLVILSVFLY). Over 541-545 (LFAYK) the chain is Extracellular. A helical transmembrane segment spans residues 546-566 (EYLACLVLAMALGWANMLYYT). At 567–569 (RGF) the chain is on the cytoplasmic side. The chain crosses the membrane as a helical span at residues 570 to 608 (QSMGMYSVMIQKVILHDVLKFLFVYILFLLGFGVALASL). The Extracellular segment spans residues 609–620 (IEKCSKDKKDCS). The pore-forming intramembrane region spans 621-646 (SYGSFSDAVLELFKLTIGLGDLNIQQ). Gly-638 contributes to the Na(+) binding site. At 647 to 649 (NST) the chain is on the extracellular side. A helical membrane pass occupies residues 650–686 (YPILFLFLLITYVILTFVLLLNMLIALMGETVENVSK). Residues 687-791 (ESERIWRLQR…ELDEFPETSV (105 aa)) lie on the Cytoplasmic side of the membrane.

It belongs to the transient receptor (TC 1.A.4) family. TrpV subfamily. TRPV3 sub-subfamily. As to quaternary structure, homotetramer. May convert from a homotetramer to a homopentamer to allow pore dilation. Interacts with TRPV1; may form a heteromeric channel with TRPV1. Interacts with SNX11; this interaction promotes TRPV3 trafficking from the cell membrane to lysosome for degradation. Expressed in keratinocytes and hair follicles.

The protein resides in the cell membrane. It localises to the cytoplasm. The protein localises to the lysosome. The catalysed reaction is Ca(2+)(in) = Ca(2+)(out). The enzyme catalyses Mg(2+)(in) = Mg(2+)(out). It carries out the reaction Na(+)(in) = Na(+)(out). It catalyses the reaction K(+)(in) = K(+)(out). With respect to regulation, activated by cannabinoid that binds to the vanilloid binding pocket. Diphenylboronic anhydride induces pore dilation and enhances cation permeability by promoting the conversion to a homopentamer. Its function is as follows. Non-selective calcium permeant cation channel. It is activated by innocuous (warm) temperatures and shows an increased response at noxious temperatures greater than 39 degrees Celsius. Activation exhibits an outward rectification. The channel pore can dilate to provide permeability to larger cations. May associate with TRPV1 and may modulate its activity. Is a negative regulator of hair growth and cycling: TRPV3-coupled signaling suppresses keratinocyte proliferation in hair follicles and induces apoptosis and premature hair follicle regression (catagen). This chain is Transient receptor potential cation channel subfamily V member 3 (Trpv3), found in Mus musculus (Mouse).